The following is a 187-amino-acid chain: GTPase KRas (187 aa).

Residues 10 to 18, 29 to 35, 59 to 60, and 116 to 119 contribute to the GTP site; these read GAVGVGKSA, VDEYDPT, AG, and NKCA. The Effector region motif lies at 32–40; it reads YDPTIEDSY. A disordered region spans residues 168 to 187; it reads EKMSKDGKKKKKSKTKCSIL. At Cys184 the chain carries Cysteine methyl ester. A lipid anchor (S-farnesyl cysteine) is attached at Cys184. The propeptide at 185-187 is removed in mature form; sequence SIL.

Belongs to the small GTPase superfamily. Ras family.

It localises to the cell membrane. The protein resides in the cytoplasm. The enzyme catalyses GTP + H2O = GDP + phosphate + H(+). Alternates between an inactive form bound to GDP and an active form bound to GTP. Activated by a guanine nucleotide-exchange factor (GEF) and inactivated by a GTPase-activating protein (GAP). Ras proteins bind GDP/GTP and possess intrinsic GTPase activity. Plays an important role in the regulation of cell proliferation. The protein is GTPase KRas (kras) of Xenopus laevis (African clawed frog).